The sequence spans 206 residues: Probable GTP-binding protein EngB (206 aa).

An EngB-type G domain is found at 24–198 (QGREVAFAGR…HARLDEWLGL (175 aa)). GTP-binding positions include 32 to 39 (GRSNVGKS), 59 to 63 (GRTQL), 77 to 80 (DLPG), 144 to 147 (TKAD), and 177 to 179 (FSA). Mg(2+) is bound by residues S39 and T61.

Belongs to the TRAFAC class TrmE-Era-EngA-EngB-Septin-like GTPase superfamily. EngB GTPase family. Mg(2+) serves as cofactor.

Functionally, necessary for normal cell division and for the maintenance of normal septation. The sequence is that of Probable GTP-binding protein EngB from Alkalilimnicola ehrlichii (strain ATCC BAA-1101 / DSM 17681 / MLHE-1).